A 268-amino-acid polypeptide reads, in one-letter code: Urease accessory protein UreD (268 aa).

It belongs to the UreD family. As to quaternary structure, ureD, UreF and UreG form a complex that acts as a GTP-hydrolysis-dependent molecular chaperone, activating the urease apoprotein by helping to assemble the nickel containing metallocenter of UreC. The UreE protein probably delivers the nickel.

Its subcellular location is the cytoplasm. Functionally, required for maturation of urease via the functional incorporation of the urease nickel metallocenter. The chain is Urease accessory protein UreD from Lysinibacillus sphaericus (strain C3-41).